A 240-amino-acid polypeptide reads, in one-letter code: Ribonuclease PH (240 aa).

Residues arginine 87 and 125–127 contribute to the phosphate site; that span reads GTR.

This sequence belongs to the RNase PH family. In terms of assembly, homohexameric ring arranged as a trimer of dimers.

It catalyses the reaction tRNA(n+1) + phosphate = tRNA(n) + a ribonucleoside 5'-diphosphate. Phosphorolytic 3'-5' exoribonuclease that plays an important role in tRNA 3'-end maturation. Removes nucleotide residues following the 3'-CCA terminus of tRNAs; can also add nucleotides to the ends of RNA molecules by using nucleoside diphosphates as substrates, but this may not be physiologically important. Probably plays a role in initiation of 16S rRNA degradation (leading to ribosome degradation) during starvation. The protein is Ribonuclease PH of Pseudomonas fluorescens (strain ATCC BAA-477 / NRRL B-23932 / Pf-5).